The primary structure comprises 1234 residues: 1-phosphatidylinositol 4,5-bisphosphate phosphodiesterase beta-3 (1234 aa).

An N-acetylalanine modification is found at Ala2. Residues 318 to 468 (DMTQPLSAYF…LMGRILVKNK (151 aa)) enclose the PI-PLC X-box domain. Residues His332 and His379 contribute to the active site. The segment at 467–587 (NKKRHRPSAG…GTASSEVNAT (121 aa)) is disordered. Ser474, Ser490, Ser495, and Ser537 each carry phosphoserine. The segment covering 488-515 (EQSNSALSESSAATEPSSPQLGSPSSDS) has biased composition (low complexity). Acidic residues predominate over residues 555–567 (REDEEEDEEEEEQ). The span at 576-587 (DEGTASSEVNAT) shows a compositional bias: polar residues. One can recognise a PI-PLC Y-box domain in the interval 590 to 706 (MSTLVNYIEP…GYLLKPEFMR (117 aa)). Positions 707 to 835 (RPDKSFDPFT…RNEANQPLCL (129 aa)) constitute a C2 domain. The span at 887-908 (AGQETCQDTQSQQLGSQPSSNP) shows a compositional bias: polar residues. Residues 887–937 (AGQETCQDTQSQQLGSQPSSNPTPSPLDASPRRPPGPTTSPASTSLSSPGQ) form a disordered region. A compositionally biased stretch (low complexity) spans 925-936 (TSPASTSLSSPG). Phosphoserine is present on residues Ser926 and Ser1105. The disordered stretch occupies residues 1198 to 1234 (GLGDGPLVACASNGHAPGSSGHLSGADSESQEENTQL). An interaction with SHANK2 region spans residues 1231-1234 (NTQL).

As to quaternary structure, interacts with SHANK2. Interacts with LPAR2. Requires Ca(2+) as cofactor.

The protein localises to the cytoplasm. It localises to the membrane. Its subcellular location is the nucleus. The catalysed reaction is a 1,2-diacyl-sn-glycero-3-phospho-(1D-myo-inositol-4,5-bisphosphate) + H2O = 1D-myo-inositol 1,4,5-trisphosphate + a 1,2-diacyl-sn-glycerol + H(+). The enzyme catalyses a 1,2-diacyl-sn-glycero-3-phospho-(1D-myo-inositol) + H2O = 1D-myo-inositol 1-phosphate + a 1,2-diacyl-sn-glycerol + H(+). Activated by G(q)/G(11) G alpha proteins in response to ligand-binding to G protein-coupled receptors. Its function is as follows. Catalyzes the production of the second messenger molecules diacylglycerol (DAG) and inositol 1,4,5-trisphosphate (IP3). Key transducer of G protein-coupled receptor signaling: activated by G(q)/G(11) G alpha proteins downstream of G protein-coupled receptors activation. In neutrophils, participates in a phospholipase C-activating N-formyl peptide-activated GPCR (G protein-coupled receptor) signaling pathway by promoting RASGRP4 activation by DAG, to promote neutrophil functional responses. This Homo sapiens (Human) protein is 1-phosphatidylinositol 4,5-bisphosphate phosphodiesterase beta-3.